The chain runs to 224 residues: Adenylate kinase (224 aa).

10-15 is an ATP binding site; the sequence is GSGKGT. The NMP stretch occupies residues 30–59; the sequence is ESGAIFRDNIKGGTDLGMKAKAYIDKGDLV. Residues Ser-31, Arg-36, 57–59, 85–88, and Gln-92 contribute to the AMP site; these read DLV and GFPR. Positions 126-165 are LID; sequence GRRLCENDNNHPNNIFIDAIKPNGDKCRVCGGALSSRADD. Arg-127 contributes to the ATP binding site. 2 residues coordinate AMP: Arg-162 and Arg-174. Residue Asn-211 coordinates ATP.

Belongs to the adenylate kinase family. In terms of assembly, monomer.

The protein localises to the cytoplasm. It carries out the reaction AMP + ATP = 2 ADP. Its pathway is purine metabolism; AMP biosynthesis via salvage pathway; AMP from ADP: step 1/1. Catalyzes the reversible transfer of the terminal phosphate group between ATP and AMP. Plays an important role in cellular energy homeostasis and in adenine nucleotide metabolism. The protein is Adenylate kinase of Desulforapulum autotrophicum (strain ATCC 43914 / DSM 3382 / VKM B-1955 / HRM2) (Desulfobacterium autotrophicum).